Here is a 689-residue protein sequence, read N- to C-terminus: Armadillo-like helical domain-containing protein 3 (689 aa).

The chain crosses the membrane as a helical span at residues 520–538; that stretch reads IFTLALMIVNLFNMFITYG.

The protein belongs to the ARMH3 family. Interacts with PI4KB. Interacts with GBF1.

The protein resides in the golgi apparatus membrane. It is found in the cytoplasm. In terms of biological role, involved in GBF1 recruitment, Golgi maintenance and protein secretion. This chain is Armadillo-like helical domain-containing protein 3, found in Homo sapiens (Human).